The following is a 343-amino-acid chain: Phenylalanine--tRNA ligase alpha subunit (343 aa).

Glu264 is a Mg(2+) binding site.

The protein belongs to the class-II aminoacyl-tRNA synthetase family. Phe-tRNA synthetase alpha subunit type 1 subfamily. As to quaternary structure, tetramer of two alpha and two beta subunits. The cofactor is Mg(2+).

Its subcellular location is the cytoplasm. It catalyses the reaction tRNA(Phe) + L-phenylalanine + ATP = L-phenylalanyl-tRNA(Phe) + AMP + diphosphate + H(+). This is Phenylalanine--tRNA ligase alpha subunit from Azoarcus sp. (strain BH72).